We begin with the raw amino-acid sequence, 1223 residues long: Kinesin-like protein costa (1223 aa).

Residues 4–394 enclose the Kinesin motor domain; that stretch reads PIQVAVRICP…LQFAFKVQCV (391 aa). Positions 13–90 are disordered; that stretch reads PYTEPSENRK…LPTDSNGNEN (78 aa). The segment covering 39 to 62 has biased composition (basic and acidic residues); the sequence is AKAESFSDSEDNKNDASNRQRPEE. 178 to 185 contributes to the ATP binding site; that stretch reads GQRGQGKT. Disordered stretches follow at residues 494–528, 560–604, and 625–646; these read RSQKQLVPIQEAEEPEESVSEPPNSDNDTDNESQR, KHPK…SIQP, and TAQPPPSVLDPESSIDPLESSA. A compositionally biased stretch (basic and acidic residues) spans 569-593; it reads QERDKESKLDAPPEKDKEKIEERKT. 3 coiled-coil regions span residues 658–743, 773–825, and 982–1015; these read AAAN…QGRE, ESGQ…GASG, and NKVIDLRDSSRKLELQLVQLERERDAWEWKERVL. Residues 774–799 are disordered; sequence SGQKLKKLQQSMAESRKQQEELEKKI. The segment covering 787–799 has biased composition (basic and acidic residues); that stretch reads ESRKQQEELEKKI. The segment covering 1162–1178 has biased composition (low complexity); it reads TTTATATTTTTTTTTTT. A disordered region spans residues 1162–1188; that stretch reads TTTATATTTTTTTTTTTGGKGKERGLP.

This sequence belongs to the TRAFAC class myosin-kinesin ATPase superfamily. Kinesin family. KIF27 subfamily. As to quaternary structure, homodimer (Potential). Binds microtubules. Interacts with ci, smo, sgg, CkIalpha and protein kinase A catalytic subunit.

Its subcellular location is the cytoplasm. It is found in the cytoskeleton. Functionally, regulates cubitus interruptus (ci) processing by recruiting multiple kinases to promote its efficient phosphorylation. Scaffolds multiple kinases and ci into proximity to promote its hyperphosphorylation, which then targets it for SCFSlimb/proteasome-mediated processing to generate its repressor form. Hh signaling inhibits ci phosphorylation by interfering with the cos-ci-kinases complex formation. In Drosophila pseudoobscura pseudoobscura (Fruit fly), this protein is Kinesin-like protein costa (cos).